A 680-amino-acid polypeptide reads, in one-letter code: Harmonin-binding protein USHBP1 (680 aa).

Basic residues predominate over residues 1–15 (MSARATRPRSRRGRH). Disordered regions lie at residues 1–101 (MSAR…GPAE), 135–162 (PVEA…GQQE), and 217–250 (ASPP…DSPM). Positions 76-86 (PEERREPEVEA) are enriched in basic and acidic residues. Coiled-coil stretches lie at residues 177 to 219 (LGTR…EASP), 362 to 386 (ATNG…VAMD), and 479 to 506 (LADL…LRAQ). The disordered stretch occupies residues 524 to 562 (LMGDGSSGGSSEDPSSEEEAGEDRQQHYQGPPALLGGQM). The stretch at 573-661 (QELSASLTRA…QQAEELAVLT (89 aa)) forms a coiled coil.

This sequence belongs to the MCC family. Interacts via its C-terminus with the first PDZ domain of USH1C.

The sequence is that of Harmonin-binding protein USHBP1 from Rattus norvegicus (Rat).